We begin with the raw amino-acid sequence, 336 residues long: Cytoskeleton protein RodZ (336 aa).

At 1 to 111 the chain is on the cytoplasmic side; the sequence is MNTEATHDKT…LGKRRKKRDG (111 aa). Residues 19-71 form the HTH cro/C1-type domain; it reads LRNAREQLGLSQQAVAERLCLKVSTVRDIEEDKAPADLASTFLRGYIRSYAKL. The H-T-H motif DNA-binding region spans 30 to 49; it reads QQAVAERLCLKVSTVRDIEE. A helical; Signal-anchor for type II membrane protein membrane pass occupies residues 112-132; the sequence is WLMSFTWLVLFVVIGLTGAWW. Over 133–336 the chain is Periplasmic; sequence WQNHKAQQEE…TVSAEQSAAQ (204 aa). Over residues 152–164 the composition is skewed to low complexity; the sequence is AALNNSGNNGAQS. Residues 152–235 are disordered; that stretch reads AALNNSGNNG…TTTGNVNVTQ (84 aa). Polar residues-rich tracts occupy residues 165-190 and 200-217; these read VPLN…TVEP and PDQT…QANV. The span at 220 to 235 shows a compositional bias: low complexity; that stretch reads APAVTPTTTGNVNVTQ.

It belongs to the RodZ family.

It localises to the cell inner membrane. Functionally, cytoskeletal protein that is involved in cell-shape control through regulation of the length of the long axis. The protein is Cytoskeleton protein RodZ of Enterobacter sp. (strain 638).